We begin with the raw amino-acid sequence, 80 residues long: MHRTFYEYLMTLRNPNDHSEIAEFAKNAFLDQSFPKQEKDYHRLSDYLELNGNYLPSMAVFDETYRAYEASESTGGDSYQ.

Belongs to the UPF0346 family.

This Lacticaseibacillus paracasei (strain ATCC 334 / BCRC 17002 / CCUG 31169 / CIP 107868 / KCTC 3260 / NRRL B-441) (Lactobacillus paracasei) protein is UPF0346 protein LSEI_1394.